Reading from the N-terminus, the 193-residue chain is Tetrahydromethanopterin S-methyltransferase subunit A 2 (193 aa).

At M1 to D38 the chain is on the cytoplasmic side. Residues I39–I58 form a helical membrane-spanning segment. The Extracellular portion of the chain corresponds to E59–A193. H84 is a binding site for 5-hydroxybenzimidazolylcob(I)amide. Residues S174–A193 are disordered.

The protein belongs to the MtrA family. In terms of assembly, the complex is composed of 8 subunits; MtrA, MtrB, MtrC, MtrD, MtrE, MtrF, MtrG and MtrH. The cofactor is 5-hydroxybenzimidazolylcob(I)amide.

Its subcellular location is the cell membrane. It carries out the reaction 5-methyl-5,6,7,8-tetrahydromethanopterin + coenzyme M + 2 Na(+)(in) = 5,6,7,8-tetrahydromethanopterin + methyl-coenzyme M + 2 Na(+)(out). It functions in the pathway one-carbon metabolism; methanogenesis from CO(2); methyl-coenzyme M from 5,10-methylene-5,6,7,8-tetrahydromethanopterin: step 2/2. Its function is as follows. Part of a complex that catalyzes the formation of methyl-coenzyme M and tetrahydromethanopterin from coenzyme M and methyl-tetrahydromethanopterin. This is an energy-conserving, sodium-ion translocating step. In Methanobrevibacter ruminantium (strain ATCC 35063 / DSM 1093 / JCM 13430 / OCM 146 / M1) (Methanobacterium ruminantium), this protein is Tetrahydromethanopterin S-methyltransferase subunit A 2.